The primary structure comprises 188 residues: uncharacterized protein (188 aa).

This is an uncharacterized protein from Haemophilus influenzae (strain ATCC 51907 / DSM 11121 / KW20 / Rd).